The sequence spans 405 residues: MHVLIAGAGLGGLTLAQNLRKRGISYEIFERDEHKDARFQGWAIALHTITDELVASMPSDMPDLRQATDHMSPLKIPTQICLYPAESNVRVGWEDCPETPFIRAERYRLRNHLATNIPIQWGKRVQRIEHDDQGVAVYFEDGTGAKGDILVGADGVKSVVRQQLLQKSHDEVLKIIPLAAIVGELKLSGEAFKRQLQLSHGSYSLIDSEKGYLTFCSLHDVAPDGKSARYYWIMSRSDPTIADPDHWLHKATQQEKLDHAREVMSNREPKFREIFDLTPVEGVKKETHIWRDLELSSLPAGRVVLMGDAAHVMTPFRGEGGYNTFIDAMALAKILDRLDKEDKTHDIESIKNSVNEYNAEMLERGVKSVQLSREWVDGSKVNSKKPLLAPMKVIPFSEVPLEVAA.

FAD-binding residues include glutamate 30, alanine 45, arginine 106, aspartate 308, and glycine 321.

This sequence belongs to the paxM FAD-dependent monooxygenase family. FAD serves as cofactor.

In terms of biological role, FAD-dependent monooxygenase; part of the gene cluster that produces the tetronate natural products trihazones. Transcription analysis of thnD confirmed this gene is expressed, hence its role in the biosynthetic pathway remains cryptic. The pathway begins with the formation of trihazone A by the hybrid PKS-NRPS synthetase thnA and the trans-enoyl reductase thnE. Trihazone A is further decarboxylated by the 2-oxoglutarate-dependent dioxygenase thnC to produce trihazone D. The function of the FAD-dependent monooxygenase thnD has still to be identified. This chain is FAD-dependent monooxygenase thnD, found in Trichoderma harzianum (Hypocrea lixii).